A 358-amino-acid polypeptide reads, in one-letter code: tRNA-specific 2-thiouridylase MnmA (358 aa).

ATP is bound by residues 7-14 and Leu33; that span reads AMSGGVDS. Cys101 serves as the catalytic Nucleophile. Cys101 and Cys197 are disulfide-bonded. Gly125 contributes to the ATP binding site. The interval 147-149 is interaction with tRNA; that stretch reads KDQ. The active-site Cysteine persulfide intermediate is Cys197.

It belongs to the MnmA/TRMU family.

The protein localises to the cytoplasm. The enzyme catalyses S-sulfanyl-L-cysteinyl-[protein] + uridine(34) in tRNA + AH2 + ATP = 2-thiouridine(34) in tRNA + L-cysteinyl-[protein] + A + AMP + diphosphate + H(+). Its function is as follows. Catalyzes the 2-thiolation of uridine at the wobble position (U34) of tRNA, leading to the formation of s(2)U34. This chain is tRNA-specific 2-thiouridylase MnmA, found in Rickettsia typhi (strain ATCC VR-144 / Wilmington).